Consider the following 419-residue polypeptide: Putative competence-damage inducible protein (419 aa).

This sequence belongs to the CinA family.

The chain is Putative competence-damage inducible protein from Streptococcus agalactiae serotype Ia (strain ATCC 27591 / A909 / CDC SS700).